The primary structure comprises 95 residues: Protein TusB (95 aa).

It belongs to the DsrH/TusB family. Heterohexamer, formed by a dimer of trimers. The hexameric TusBCD complex contains 2 copies each of TusB, TusC and TusD. The TusBCD complex interacts with TusE.

The protein resides in the cytoplasm. In terms of biological role, part of a sulfur-relay system required for 2-thiolation of 5-methylaminomethyl-2-thiouridine (mnm(5)s(2)U) at tRNA wobble positions. The sequence is that of Protein TusB from Escherichia fergusonii (strain ATCC 35469 / DSM 13698 / CCUG 18766 / IAM 14443 / JCM 21226 / LMG 7866 / NBRC 102419 / NCTC 12128 / CDC 0568-73).